Consider the following 138-residue polypeptide: Cysteine desulfuration protein SufE (138 aa).

C51 functions as the Cysteine persulfide intermediate in the catalytic mechanism.

This sequence belongs to the SufE family. Homodimer. Interacts with SufS.

Its subcellular location is the cytoplasm. Its pathway is cofactor biosynthesis; iron-sulfur cluster biosynthesis. Functionally, participates in cysteine desulfuration mediated by SufS. Cysteine desulfuration mobilizes sulfur from L-cysteine to yield L-alanine and constitutes an essential step in sulfur metabolism for biosynthesis of a variety of sulfur-containing biomolecules. Functions as a sulfur acceptor for SufS, by mediating the direct transfer of the sulfur atom from the S-sulfanylcysteine of SufS, an intermediate product of cysteine desulfuration process. This Salmonella arizonae (strain ATCC BAA-731 / CDC346-86 / RSK2980) protein is Cysteine desulfuration protein SufE.